Reading from the N-terminus, the 56-residue chain is Large ribosomal subunit protein bL32 (56 aa).

The interval 1 to 38 (MAVQQNKKSRSKRGMRRSHDSLSTAQLSVDATSGELHR) is disordered. The span at 7–16 (KKSRSKRGMR) shows a compositional bias: basic residues. Polar residues predominate over residues 21 to 31 (SLSTAQLSVDA).

Belongs to the bacterial ribosomal protein bL32 family.

In Shewanella woodyi (strain ATCC 51908 / MS32), this protein is Large ribosomal subunit protein bL32.